A 116-amino-acid chain; its full sequence is Large ribosomal subunit protein bL17 (116 aa).

This sequence belongs to the bacterial ribosomal protein bL17 family. Part of the 50S ribosomal subunit. Contacts protein L32.

The polypeptide is Large ribosomal subunit protein bL17 (Crocosphaera subtropica (strain ATCC 51142 / BH68) (Cyanothece sp. (strain ATCC 51142))).